Here is a 155-residue protein sequence, read N- to C-terminus: Small ribosomal subunit protein uS7cz/uS7cy (155 aa).

It belongs to the universal ribosomal protein uS7 family. Part of the 30S ribosomal subunit.

It is found in the plastid. Its subcellular location is the chloroplast. Functionally, one of the primary rRNA binding proteins, it binds directly to 16S rRNA where it nucleates assembly of the head domain of the 30S subunit. This Chloranthus spicatus (Chulantree) protein is Small ribosomal subunit protein uS7cz/uS7cy (rps7-A).